Consider the following 103-residue polypeptide: Large ribosomal subunit protein bL21 (103 aa).

The protein belongs to the bacterial ribosomal protein bL21 family. In terms of assembly, part of the 50S ribosomal subunit. Contacts protein L20.

This protein binds to 23S rRNA in the presence of protein L20. This Shewanella loihica (strain ATCC BAA-1088 / PV-4) protein is Large ribosomal subunit protein bL21.